A 271-amino-acid chain; its full sequence is Transmembrane protein 150A (271 aa).

Over 1 to 2 (MT) the chain is Cytoplasmic. Residues 3-23 (AWILLPVSLSAFSITGIWTVY) traverse the membrane as a helical segment. Residues 24–75 (AMAVMNRHVCPVENWSYNESCSPDPAEQGGPKSCCTLDDVPLISKCGTYPPE) lie on the Extracellular side of the membrane. Asn37 and Asn41 each carry an N-linked (GlcNAc...) asparagine glycan. The chain crosses the membrane as a helical span at residues 76–96 (SCLFSLIGNMGAVMVALICLL). The Cytoplasmic portion of the chain corresponds to 97-108 (RYGQLLEQSRHS). A helical transmembrane segment spans residues 109–129 (WINTTALITGCTNAAGLVVVG). Topologically, residues 130–140 (NFQVDHAKSLH) are extracellular. The chain crosses the membrane as a helical span at residues 141–161 (YIGTGVAFTAGLLFVCLHCVL). Topologically, residues 162 to 178 (FYHGATTPLDMAMAYLR) are cytoplasmic. A helical membrane pass occupies residues 179–199 (SVLAVIAFITLVLSGVFFLHE). The Extracellular portion of the chain corresponds to 200 to 211 (SSQLQHGAALCE). The helical transmembrane segment at 212 to 232 (WVFVLDILIFYGTFSYEFGTI) threads the bilayer. Topologically, residues 233 to 271 (SSDTLVAALQPAPGRACKSSGSSSTSTHLNCAPESIAMI) are cytoplasmic.

The protein belongs to the DRAM/TMEM150 family. Interacts (via C-terminal cytoplasmic tail) with PI4KA.

It localises to the cell membrane. Functionally, regulates localization of phosphatidylinositol 4-kinase (PI4K) to the plasma membrane, possibly by reducing the association of TTC7 (TTC7A or TTC7B) with the PI4K complex. Acts as a regulator of phosphatidylinositol 4-phosphate (PtdIns(4)P) synthesis. May also play a role in fasting-induced catabolism. This is Transmembrane protein 150A (Tmem150a) from Mus musculus (Mouse).